The sequence spans 467 residues: Uronate isomerase (467 aa).

This sequence belongs to the metallo-dependent hydrolases superfamily. Uronate isomerase family.

The enzyme catalyses D-glucuronate = D-fructuronate. It carries out the reaction aldehydo-D-galacturonate = keto-D-tagaturonate. It participates in carbohydrate metabolism; pentose and glucuronate interconversion. This is Uronate isomerase from Clostridium acetobutylicum (strain ATCC 824 / DSM 792 / JCM 1419 / IAM 19013 / LMG 5710 / NBRC 13948 / NRRL B-527 / VKM B-1787 / 2291 / W).